We begin with the raw amino-acid sequence, 413 residues long: Serine hydroxymethyltransferase (413 aa).

(6S)-5,6,7,8-tetrahydrofolate-binding positions include L117 and 121-123; that span reads GHL. Position 226 is an N6-(pyridoxal phosphate)lysine (K226). (6S)-5,6,7,8-tetrahydrofolate-binding positions include E239 and 349–351; that span reads SPF.

It belongs to the SHMT family. Homodimer. The cofactor is pyridoxal 5'-phosphate.

Its subcellular location is the cytoplasm. The enzyme catalyses (6R)-5,10-methylene-5,6,7,8-tetrahydrofolate + glycine + H2O = (6S)-5,6,7,8-tetrahydrofolate + L-serine. It functions in the pathway one-carbon metabolism; tetrahydrofolate interconversion. It participates in amino-acid biosynthesis; glycine biosynthesis; glycine from L-serine: step 1/1. Its function is as follows. Catalyzes the reversible interconversion of serine and glycine with tetrahydrofolate (THF) serving as the one-carbon carrier. This reaction serves as the major source of one-carbon groups required for the biosynthesis of purines, thymidylate, methionine, and other important biomolecules. Also exhibits THF-independent aldolase activity toward beta-hydroxyamino acids, producing glycine and aldehydes, via a retro-aldol mechanism. This is Serine hydroxymethyltransferase from Bacillus mycoides (strain KBAB4) (Bacillus weihenstephanensis).